Here is a 245-residue protein sequence, read N- to C-terminus: Intron-associated endonuclease 1 (245 aa).

The GIY-YIG domain maps to 1 to 88; that stretch reads MKSGIYQIKN…IKELNSKING (88 aa).

To endonucleases of group I introns of fungi and phage. The cofactor is Mg(2+).

In terms of biological role, this endonuclease is specific to the thymidylate synthase (td) gene splice junction and is involved in intron homing. The sequence is that of Intron-associated endonuclease 1 (ITEVIR) from Enterobacteria phage T4 (Bacteriophage T4).